We begin with the raw amino-acid sequence, 576 residues long: Sulfite reductase [NADPH] hemoprotein beta-component (576 aa).

[4Fe-4S] cluster contacts are provided by Cys-435, Cys-441, Cys-480, and Cys-484. Position 484 (Cys-484) interacts with siroheme.

This sequence belongs to the nitrite and sulfite reductase 4Fe-4S domain family. As to quaternary structure, alpha(8)-beta(8). The alpha component is a flavoprotein, the beta component is a hemoprotein. It depends on siroheme as a cofactor. [4Fe-4S] cluster is required as a cofactor.

It catalyses the reaction hydrogen sulfide + 3 NADP(+) + 3 H2O = sulfite + 3 NADPH + 4 H(+). It participates in sulfur metabolism; hydrogen sulfide biosynthesis; hydrogen sulfide from sulfite (NADPH route): step 1/1. Functionally, component of the sulfite reductase complex that catalyzes the 6-electron reduction of sulfite to sulfide. This is one of several activities required for the biosynthesis of L-cysteine from sulfate. This is Sulfite reductase [NADPH] hemoprotein beta-component from Yersinia pestis bv. Antiqua (strain Antiqua).